Here is a 275-residue protein sequence, read N- to C-terminus: 4-diphosphocytidyl-2-C-methyl-D-erythritol kinase (275 aa).

Lysine 14 is an active-site residue. Residue 98-108 (PMGAGLGGGSS) coordinates ATP. The active site involves aspartate 140.

This sequence belongs to the GHMP kinase family. IspE subfamily.

The enzyme catalyses 4-CDP-2-C-methyl-D-erythritol + ATP = 4-CDP-2-C-methyl-D-erythritol 2-phosphate + ADP + H(+). Its pathway is isoprenoid biosynthesis; isopentenyl diphosphate biosynthesis via DXP pathway; isopentenyl diphosphate from 1-deoxy-D-xylulose 5-phosphate: step 3/6. In terms of biological role, catalyzes the phosphorylation of the position 2 hydroxy group of 4-diphosphocytidyl-2C-methyl-D-erythritol. The chain is 4-diphosphocytidyl-2-C-methyl-D-erythritol kinase from Francisella tularensis subsp. tularensis (strain WY96-3418).